The sequence spans 208 residues: Regulator of Ty1 transposition protein 105 (208 aa).

Residues 28 to 105 (GVSFDRSLTP…QRADQRSRLE (78 aa)) form a disordered region. Residues 33 to 42 (RSLTPQSLRT) are compositionally biased toward polar residues. The span at 60 to 71 (IDTSPSVVSDII) shows a compositional bias: low complexity. Residues 94 to 105 (ERQRADQRSRLE) show a composition bias toward basic and acidic residues.

The protein resides in the cytoplasm. It is found in the nucleus. Involved in regulation of Ty1 transposition. Inhibits Ty1 transposition at a post-transcriptional and pre-integrational stage of the Ty1 retrotransposition cycle. In Saccharomyces cerevisiae (strain YJM789) (Baker's yeast), this protein is Regulator of Ty1 transposition protein 105 (RTT105).